We begin with the raw amino-acid sequence, 297 residues long: Formylmethanofuran--tetrahydromethanopterin formyltransferase (297 aa).

Belongs to the FTR family. Homotetramer.

Its subcellular location is the cytoplasm. It catalyses the reaction N-formylmethanofuran + 5,6,7,8-tetrahydromethanopterin + H(+) = N(5)-formyl-5,6,7,8-tetrahydromethanopterin + methanofuran. Its pathway is one-carbon metabolism; methanogenesis from CO(2); 5,10-methenyl-5,6,7,8-tetrahydromethanopterin from CO(2): step 2/3. Catalyzes the reversible transfer of a formyl group from formylmethanofuran (formyl-MFR) to tetrahydromethanopterin (H(4)MPT) to produce 5-formyl tetrahydromethanopterin (5-formyl-H(4)MPT) and methanofuran (MFR). The protein is Formylmethanofuran--tetrahydromethanopterin formyltransferase of Methanothermus fervidus (strain ATCC 43054 / DSM 2088 / JCM 10308 / V24 S).